A 298-amino-acid chain; its full sequence is Acetylglutamate kinase (298 aa).

Residues 69–70 (GG), arginine 91, and asparagine 191 each bind substrate.

It belongs to the acetylglutamate kinase family. ArgB subfamily.

The protein resides in the cytoplasm. It carries out the reaction N-acetyl-L-glutamate + ATP = N-acetyl-L-glutamyl 5-phosphate + ADP. Its pathway is amino-acid biosynthesis; L-arginine biosynthesis; N(2)-acetyl-L-ornithine from L-glutamate: step 2/4. Functionally, catalyzes the ATP-dependent phosphorylation of N-acetyl-L-glutamate. In Neisseria meningitidis serogroup C (strain 053442), this protein is Acetylglutamate kinase.